Consider the following 51-residue polypeptide: ATP synthase F(1) complex subunit epsilon, mitochondrial (51 aa).

N6-acetyllysine; alternate is present on residues lysine 21, lysine 32, and lysine 37. An N6-succinyllysine; alternate mark is found at lysine 21, lysine 32, and lysine 37. Position 44 is an N6-acetyllysine (lysine 44).

This sequence belongs to the eukaryotic ATPase epsilon family. Component of the ATP synthase complex composed at least of ATP5F1A/subunit alpha, ATP5F1B/subunit beta, ATP5MC1/subunit c (homooctomer), MT-ATP6/subunit a, MT-ATP8/subunit 8, ATP5ME/subunit e, ATP5MF/subunit f, ATP5MG/subunit g, ATP5MK/subunit k, ATP5MJ/subunit j, ATP5F1C/subunit gamma, ATP5F1D/subunit delta, ATP5F1E/subunit epsilon, ATP5PF/subunit F6, ATP5PB/subunit b, ATP5PD/subunit d, ATP5PO/subunit OSCP. ATP synthase complex consists of a soluble F(1) head domain (subunits alpha(3) and beta(3)) - the catalytic core - and a membrane F(0) domain - the membrane proton channel (subunits c, a, 8, e, f, g, k and j). These two domains are linked by a central stalk (subunits gamma, delta, and epsilon) rotating inside the F1 region and a stationary peripheral stalk (subunits F6, b, d, and OSCP).

It is found in the mitochondrion. It localises to the mitochondrion inner membrane. Subunit epsilon, of the mitochondrial membrane ATP synthase complex (F(1)F(0) ATP synthase or Complex V) that produces ATP from ADP in the presence of a proton gradient across the membrane which is generated by electron transport complexes of the respiratory chain. ATP synthase complex consist of a soluble F(1) head domain - the catalytic core - and a membrane F(1) domain - the membrane proton channel. These two domains are linked by a central stalk rotating inside the F(1) region and a stationary peripheral stalk. During catalysis, ATP synthesis in the catalytic domain of F(1) is coupled via a rotary mechanism of the central stalk subunits to proton translocation. In vivo, can only synthesize ATP although its ATP hydrolase activity can be activated artificially in vitro. May be essential for the assembly of F(1) and may play an important role in the incorporation of the hydrophobic subunit c into the F(1)-c oligomer rotor of the mitochondrial ATP synthase complex. This chain is ATP synthase F(1) complex subunit epsilon, mitochondrial, found in Bos taurus (Bovine).